The primary structure comprises 238 residues: MRPSGRKPDELRPVRLTRHYTRHAEGSVLVEFGDTRVLCTASVEERVPPWLRNQGRGWVTAEYGMLPRSTGTRNDREAARGKQQGRTIEIQRLIGRALRAAVDLEALGERRVVLDCDVLQADGGTRTAAITGAYVALVDACNLLRKEGRIRRSPIFGQVAAVSVGIYQGTPVLDLDYAEDSEAETDMNVVMNEAGGFIELQGTAEGHAFRRDELNAMTELAELGVAQLIETQRQALEA.

Phosphate-binding positions include Arg-86 and 124-126 (GTR).

This sequence belongs to the RNase PH family. As to quaternary structure, homohexameric ring arranged as a trimer of dimers.

It carries out the reaction tRNA(n+1) + phosphate = tRNA(n) + a ribonucleoside 5'-diphosphate. Functionally, phosphorolytic 3'-5' exoribonuclease that plays an important role in tRNA 3'-end maturation. Removes nucleotide residues following the 3'-CCA terminus of tRNAs; can also add nucleotides to the ends of RNA molecules by using nucleoside diphosphates as substrates, but this may not be physiologically important. Probably plays a role in initiation of 16S rRNA degradation (leading to ribosome degradation) during starvation. This chain is Ribonuclease PH, found in Alkalilimnicola ehrlichii (strain ATCC BAA-1101 / DSM 17681 / MLHE-1).